The primary structure comprises 455 residues: Gamma-glutamyl phosphate reductase (455 aa).

The protein belongs to the gamma-glutamyl phosphate reductase family.

Its subcellular location is the cytoplasm. The catalysed reaction is L-glutamate 5-semialdehyde + phosphate + NADP(+) = L-glutamyl 5-phosphate + NADPH + H(+). It functions in the pathway amino-acid biosynthesis; L-proline biosynthesis; L-glutamate 5-semialdehyde from L-glutamate: step 2/2. Catalyzes the NADPH-dependent reduction of L-glutamate 5-phosphate into L-glutamate 5-semialdehyde and phosphate. The product spontaneously undergoes cyclization to form 1-pyrroline-5-carboxylate. The sequence is that of Gamma-glutamyl phosphate reductase from Synechococcus sp. (strain JA-2-3B'a(2-13)) (Cyanobacteria bacterium Yellowstone B-Prime).